We begin with the raw amino-acid sequence, 166 residues long: Probable chemoreceptor glutamine deamidase CheD (166 aa).

It belongs to the CheD family.

The enzyme catalyses L-glutaminyl-[protein] + H2O = L-glutamyl-[protein] + NH4(+). In terms of biological role, probably deamidates glutamine residues to glutamate on methyl-accepting chemotaxis receptors (MCPs), playing an important role in chemotaxis. The protein is Probable chemoreceptor glutamine deamidase CheD of Oceanobacillus iheyensis (strain DSM 14371 / CIP 107618 / JCM 11309 / KCTC 3954 / HTE831).